Here is a 261-residue protein sequence, read N- to C-terminus: Carbonic anhydrase 1 (261 aa).

The segment at 1–31 (MASPDWGYDDKNGPEQWSKLYPIANGNNQSP) is disordered. The residue at position 2 (Ala2) is an N-acetylalanine. Residues 4–261 (PDWGYDDKNG…LKGRTVRASF (258 aa)) form the Alpha-carbonic anhydrase domain. Catalysis depends on His65, which acts as the Proton donor/acceptor. 5 residues coordinate Zn(2+): His65, His68, His95, His97, and His120. Substrate-binding positions include Thr200 and 200-201 (TH). His201 is a binding site for Zn(2+). The segment at 241 to 261 (PMQHNNRPTQPLKGRTVRASF) is disordered.

It belongs to the alpha-carbonic anhydrase family. It depends on Zn(2+) as a cofactor.

Its subcellular location is the cytoplasm. It carries out the reaction hydrogencarbonate + H(+) = CO2 + H2O. It catalyses the reaction urea = cyanamide + H2O. With respect to regulation, activated by histamine, imidazole, L-adrenaline, L- and D-histidine, and L- and D-phenylalanine. Inhibited by coumarins, sulfonamide derivatives such as acetazolamide, benzenesulfonamide and derivatives (4-carboxyethylbenzene-sulfonamide, 4-carboxyethylbenzene-sulfonamide ethyl ester, 4-(acetyl-2-aminoethyl)benzene-sulfonamide, 4-aminoethylbenzene-sulfonamide), and 'prong inhibitors' BR15, BR17, BR22 and BR30. Activated by a short exposition to Foscarnet (phosphonoformate trisodium salt), but inhibited by a long one. Esterase activity weakly reduced by cyanamide. Functionally, catalyzes the reversible hydration of carbon dioxide. Can hydrate cyanamide to urea. This Homo sapiens (Human) protein is Carbonic anhydrase 1 (CA1).